Reading from the N-terminus, the 336-residue chain is Probable G-protein coupled receptor 160 (336 aa).

The Extracellular portion of the chain corresponds to 1–21 (MTALPSKNCSFQYQSHQAPRS). A glycan (N-linked (GlcNAc...) asparagine) is linked at asparagine 8. Residues 22–42 (LDATCLLLLIILGKVLLNVLI) form a helical membrane-spanning segment. Over 43-56 (LRVKRKDTSWSFME) the chain is Cytoplasmic. A helical membrane pass occupies residues 57–77 (YFCFSLALVDLLLLVNISVLT). At 78–95 (YFRDFVVLGIRFTNYHIC) the chain is on the extracellular side. Residues 96–116 (LLTQIVSFAYGFLHYPVCSLA) traverse the membrane as a helical segment. At 117–136 (CIDYWCNLSRATKPSSRWQK) the chain is on the cytoplasmic side. A helical membrane pass occupies residues 137–157 (LLYLLTVILTWISVLAYVLGD). Over 158 to 187 (PAISASLKTHKTSVNQCPSYVSTQSHWLSL) the chain is Extracellular. Residues 188-208 (SMLMILSVAFLISWQEVVALI) traverse the membrane as a helical segment. Over 209–243 (QAIRIASYKNKAVLYFPFPPHTSYTVSPRAVLLPR) the chain is Cytoplasmic. Residues 244–264 (LIVCFLGTWFPFVALQVLILS) traverse the membrane as a helical segment. Over 265 to 272 (LRVQIPAY) the chain is Extracellular. Residues 273–293 (IEMNVPWLYFVNSFLIAAVYW) form a helical membrane-spanning segment. The Cytoplasmic portion of the chain corresponds to 294–336 (FNCHKLYWRDGMFPVDPFINWKCCFVPVHRLKQVERPMSIIIC).

This sequence belongs to the G-protein coupled receptor 1 family.

Its subcellular location is the cell membrane. Functionally, orphan receptor. This Rattus norvegicus (Rat) protein is Probable G-protein coupled receptor 160 (Gpr160).